Consider the following 479-residue polypeptide: Mannose-1-phosphate guanylyltransferase RfbM (479 aa).

Belongs to the mannose-6-phosphate isomerase type 2 family. As to quaternary structure, homodimer.

The catalysed reaction is alpha-D-mannose 1-phosphate + GTP + H(+) = GDP-alpha-D-mannose + diphosphate. The protein operates within nucleotide-sugar biosynthesis; GDP-alpha-D-mannose biosynthesis; GDP-alpha-D-mannose from alpha-D-mannose 1-phosphate (GTP route): step 1/1. It functions in the pathway bacterial outer membrane biogenesis; LPS O-antigen biosynthesis. In terms of biological role, involved in GDP-mannose biosynthesis which serves as the activated sugar nucleotide precursor for mannose residues in cell surface polysaccharides. This enzyme participates in synthesis of the LPS group B O antigen. This Salmonella typhimurium (strain LT2 / SGSC1412 / ATCC 700720) protein is Mannose-1-phosphate guanylyltransferase RfbM (rfbM).